The chain runs to 400 residues: Telomere repeat-binding protein 6 (400 aa).

Positions 173-252 constitute a Ubiquitin-like domain; the sequence is VKFGIKSLNI…DDENLGSLGF (80 aa). The HTH myb-type domain occupies 310–369; that stretch reads VQRRIRRPFTVSEVEALVQAVERLGTGRWRDVKSHAFNHVNHRTYVDLKDKWKTLVHTAK. Positions 338–365 form a DNA-binding region, H-T-H motif; that stretch reads WRDVKSHAFNHVNHRTYVDLKDKWKTLV.

As to quaternary structure, homodimer. In terms of tissue distribution, expressed ubiquitously.

Its subcellular location is the nucleus. Functionally, binds specifically to the plant telomeric double-stranded DNA sequences. At least 4 repeats of telomeric sequences are required for binding. The polypeptide is Telomere repeat-binding protein 6 (TRP6) (Arabidopsis thaliana (Mouse-ear cress)).